Reading from the N-terminus, the 344-residue chain is Lipase chaperone (344 aa).

The helical transmembrane segment at 14 to 34 (VAVYGAVGLAAIAGVAIWSGA) threads the bilayer. Residues 45-57 (LSADAAARDGASA) are compositionally biased toward low complexity. The segment at 45–78 (LSADAAARDGASAAPPPPARPASAGMPSPLAGSS) is disordered.

The protein belongs to the lipase chaperone family.

It is found in the cell inner membrane. Its function is as follows. May be involved in the folding of the extracellular lipase during its passage through the periplasm. The sequence is that of Lipase chaperone from Burkholderia ambifaria (strain ATCC BAA-244 / DSM 16087 / CCUG 44356 / LMG 19182 / AMMD) (Burkholderia cepacia (strain AMMD)).